Here is a 391-residue protein sequence, read N- to C-terminus: Heme A synthase (391 aa).

Transmembrane regions (helical) follow at residues 37-57 (IRLW…VGGL), 121-141 (RQLG…FLAA), 152-172 (LLAL…MVAS), 186-206 (LATH…QALL), 229-249 (TTVL…VAGI), 298-318 (FLHR…WIFG), 332-352 (LLAM…LSAA), and 354-374 (WQVA…ILHA). Residue His-300 participates in heme binding. His-360 is a heme binding site.

It belongs to the COX15/CtaA family. Type 2 subfamily. As to quaternary structure, interacts with CtaB. Heme b serves as cofactor.

It is found in the cell membrane. The enzyme catalyses Fe(II)-heme o + 2 A + H2O = Fe(II)-heme a + 2 AH2. Its pathway is porphyrin-containing compound metabolism; heme A biosynthesis; heme A from heme O: step 1/1. Its function is as follows. Catalyzes the conversion of heme O to heme A by two successive hydroxylations of the methyl group at C8. The first hydroxylation forms heme I, the second hydroxylation results in an unstable dihydroxymethyl group, which spontaneously dehydrates, resulting in the formyl group of heme A. This Cereibacter sphaeroides (strain ATCC 17029 / ATH 2.4.9) (Rhodobacter sphaeroides) protein is Heme A synthase.